A 60-amino-acid chain; its full sequence is Small, acid-soluble spore protein C2 (60 aa).

Belongs to the alpha/beta-type SASP family. Post-translationally, SASP are degraded in the first minutes of spore germination and provide amino acids for both new protein synthesis and metabolism.

Functionally, SASP are bound to spore DNA. They are double-stranded DNA-binding proteins that cause DNA to change to an a-like conformation. They protect the DNA backbone from chemical and enzymatic cleavage and are thus involved in dormant spore's high resistance to UV light. This Clostridium perfringens (strain 13 / Type A) protein is Small, acid-soluble spore protein C2 (sspC2).